Consider the following 133-residue polypeptide: Nickel-responsive regulator (133 aa).

Ni(2+) is bound by residues His-76, His-87, His-89, and Cys-95.

The protein belongs to the transcriptional regulatory CopG/NikR family. As to quaternary structure, homotetramer. It depends on Ni(2+) as a cofactor.

Its function is as follows. Transcriptional repressor of the nikABCDE operon. Is active in the presence of excessive concentrations of intracellular nickel. This is Nickel-responsive regulator from Salmonella paratyphi A (strain ATCC 9150 / SARB42).